The chain runs to 370 residues: Putative agmatine deiminase (370 aa).

The active-site Amidino-cysteine intermediate is the Cys-361.

It belongs to the agmatine deiminase family.

The catalysed reaction is agmatine + H2O = N-carbamoylputrescine + NH4(+). This Shewanella baltica (strain OS195) protein is Putative agmatine deiminase.